A 320-amino-acid chain; its full sequence is Cytochrome f (320 aa).

Positions M1 to A35 are cleaved as a signal peptide. Heme-binding residues include Y36, C56, C59, and H60. Residues V286 to K306 form a helical membrane-spanning segment.

The protein belongs to the cytochrome f family. The 4 large subunits of the cytochrome b6-f complex are cytochrome b6, subunit IV (17 kDa polypeptide, petD), cytochrome f and the Rieske protein, while the 4 small subunits are PetG, PetL, PetM and PetN. The complex functions as a dimer. The cofactor is heme.

The protein localises to the plastid. Its subcellular location is the chloroplast thylakoid membrane. Functionally, component of the cytochrome b6-f complex, which mediates electron transfer between photosystem II (PSII) and photosystem I (PSI), cyclic electron flow around PSI, and state transitions. This chain is Cytochrome f, found in Cucumis sativus (Cucumber).